The sequence spans 156 residues: Small ribosomal subunit protein uS7 (156 aa).

The protein belongs to the universal ribosomal protein uS7 family. Part of the 30S ribosomal subunit. Contacts proteins S9 and S11.

Functionally, one of the primary rRNA binding proteins, it binds directly to 16S rRNA where it nucleates assembly of the head domain of the 30S subunit. Is located at the subunit interface close to the decoding center, probably blocks exit of the E-site tRNA. The protein is Small ribosomal subunit protein uS7 of Prochlorococcus marinus (strain MIT 9211).